We begin with the raw amino-acid sequence, 1382 residues long: Ninein-like protein (1382 aa).

2 consecutive EF-hand domains span residues 7–42 and 41–76; these read HYVS…LHLE and LEQQ…VLSS. Residues 144-164 are disordered; the sequence is ASLESVESPKSDEEAESTKEA. A Phosphoserine modification is found at Ser-148. The segment covering 150–164 has biased composition (basic and acidic residues); it reads ESPKSDEEAESTKEA. EF-hand domains are found at residues 196-231 and 233-268; these read TPES…VGLQ and LEKE…HEPA. Positions 246, 248, 250, 252, and 257 each coordinate Ca(2+). Coiled coils occupy residues 384–424, 484–579, and 616–699; these read QELS…MDDC, AGLR…WARL, and IETE…QLQD. Positions 495–497 match the KEN box motif; it reads KEN. Positions 633–641 match the D-box motif; it reads RTQLETKVN. 2 disordered regions span residues 857–969 and 982–1006; these read PLAW…ASCR and RARS…GALE. Low complexity predominate over residues 991–1004; sequence QEQASEQQARAEGA. The stretch at 1046–1375 forms a coiled coil; it reads ETKIALEREK…RALNKLVSRI (330 aa).

As to quaternary structure, interacts with gamma-tubulin and TUBGCP4. Interacts with anaphase promoting complex/cyclosome (APC/C). Interacts with CDC20 and FZR1. Isoform 2 interacts with LCA5 and USH2A. Isoform 2 interacts with DZANK1. Post-translationally, phosphorylated by PLK1 which disrupts its centrosome association and interaction with gamma-tubulin. In terms of processing, ubiquitinated by the APC/C complex leading to its degradation. As to expression, expressed in KYSE-150 esophageal carcinoma, HeLa cervical carcinoma and U2OS osteosarcoma cells. Expression is regulated in a cell cycle-dependent manner and peaks during G2/M phase (at protein level). Expressed in fetal heart, skeletal muscle, liver, lung and cochlea, and in adult brain, testis, kidney and retina.

It localises to the cytoplasm. The protein localises to the cytoskeleton. The protein resides in the microtubule organizing center. It is found in the centrosome. In terms of biological role, involved in the microtubule organization in interphase cells. Overexpression induces the fragmentation of the Golgi, and causes lysosomes to disperse toward the cell periphery; it also interferes with mitotic spindle assembly. Involved in vesicle transport in photoreceptor cells. May play a role in ovarian carcinogenesis. This chain is Ninein-like protein (NINL), found in Homo sapiens (Human).